The chain runs to 260 residues: Pyridoxine 5'-phosphate synthase (260 aa).

Asn-6 is a 3-amino-2-oxopropyl phosphate binding site. Asp-8–His-9 contacts 1-deoxy-D-xylulose 5-phosphate. Arg-17 serves as a coordination point for 3-amino-2-oxopropyl phosphate. Catalysis depends on His-42, which acts as the Proton acceptor. 1-deoxy-D-xylulose 5-phosphate contacts are provided by Arg-44 and His-49. Residue Glu-69 is the Proton acceptor of the active site. 1-deoxy-D-xylulose 5-phosphate is bound at residue Thr-99. His-213 acts as the Proton donor in catalysis. Residues Gly-214 and Gly-235 to Gln-236 each bind 3-amino-2-oxopropyl phosphate.

The protein belongs to the PNP synthase family. Homooctamer; tetramer of dimers.

It is found in the cytoplasm. It catalyses the reaction 3-amino-2-oxopropyl phosphate + 1-deoxy-D-xylulose 5-phosphate = pyridoxine 5'-phosphate + phosphate + 2 H2O + H(+). Its pathway is cofactor biosynthesis; pyridoxine 5'-phosphate biosynthesis; pyridoxine 5'-phosphate from D-erythrose 4-phosphate: step 5/5. Catalyzes the complicated ring closure reaction between the two acyclic compounds 1-deoxy-D-xylulose-5-phosphate (DXP) and 3-amino-2-oxopropyl phosphate (1-amino-acetone-3-phosphate or AAP) to form pyridoxine 5'-phosphate (PNP) and inorganic phosphate. This chain is Pyridoxine 5'-phosphate synthase, found in Sulfurimonas denitrificans (strain ATCC 33889 / DSM 1251) (Thiomicrospira denitrificans (strain ATCC 33889 / DSM 1251)).